The primary structure comprises 178 residues: Interleukin-10 (178 aa).

The first 18 residues, 1–18 (MHSSALLCYLVFLAGVGA), serve as a signal peptide directing secretion. Intrachain disulfides connect Cys-30-Cys-126 and Cys-80-Cys-132. The N-linked (GlcNAc...) asparagine glycan is linked to Asn-67. Residue Asn-134 is glycosylated (N-linked (GlcNAc...) asparagine).

It belongs to the IL-10 family. As to quaternary structure, homodimer. Interacts with IL10RA and IL10RB.

The protein resides in the secreted. In terms of biological role, major immune regulatory cytokine that acts on many cells of the immune system where it has profound anti-inflammatory functions, limiting excessive tissue disruption caused by inflammation. Mechanistically, IL10 binds to its heterotetrameric receptor comprising IL10RA and IL10RB leading to JAK1 and STAT2-mediated phosphorylation of STAT3. In turn, STAT3 translocates to the nucleus where it drives expression of anti-inflammatory mediators. Targets antigen-presenting cells (APCs) such as macrophages and monocytes and inhibits their release of pro-inflammatory cytokines including granulocyte-macrophage colony-stimulating factor /GM-CSF, granulocyte colony-stimulating factor/G-CSF, IL-1 alpha, IL-1 beta, IL-6, IL-8 and TNF-alpha. Also interferes with antigen presentation by reducing the expression of MHC-class II and co-stimulatory molecules, thereby inhibiting their ability to induce T cell activation. In addition, controls the inflammatory response of macrophages by reprogramming essential metabolic pathways including mTOR signaling. The protein is Interleukin-10 (IL10) of Equus caballus (Horse).